Here is an 835-residue protein sequence, read N- to C-terminus: U-box domain-containing protein 35 (835 aa).

Disordered regions lie at residues 1–22 (MSRSPDKLALPPPPPPPPSRTV), 177–303 (VRPS…SSNR), and 410–457 (EKEK…LEGT). Pro residues predominate over residues 10–19 (LPPPPPPPPS). The segment covering 195–218 (RTNSSSGSSGPTSDSSDVMSSAHD) has biased composition (low complexity). The segment covering 269 to 282 (SSINRSSTDTTSRW) has biased composition (polar residues). Composition is skewed to basic and acidic residues over residues 285–295 (RRRDYEERKEA) and 410–455 (EKEK…EKLE). A coiled-coil region spans residues 340 to 459 (QSYTDNQVNL…EKEKLEGTLG (120 aa)). One can recognise a Protein kinase domain in the interval 480–745 (FSEELKIGMG…DLKDQILPAL (266 aa)). Residues 486 to 494 (IGMGAYGAV) and Lys-507 each bind ATP. The active-site Proton acceptor is Asp-602. The 71-residue stretch at 765 to 835 (QPPTHFICPL…TAIMEWRSTR (71 aa)) folds into the U-box domain.

It belongs to the protein kinase superfamily. Ser/Thr protein kinase family.

It catalyses the reaction L-seryl-[protein] + ATP = O-phospho-L-seryl-[protein] + ADP + H(+). It carries out the reaction L-threonyl-[protein] + ATP = O-phospho-L-threonyl-[protein] + ADP + H(+). The catalysed reaction is S-ubiquitinyl-[E2 ubiquitin-conjugating enzyme]-L-cysteine + [acceptor protein]-L-lysine = [E2 ubiquitin-conjugating enzyme]-L-cysteine + N(6)-ubiquitinyl-[acceptor protein]-L-lysine.. Its pathway is protein modification; protein ubiquitination. Its function is as follows. Functions as an E3 ubiquitin ligase. This chain is U-box domain-containing protein 35 (PUB35), found in Arabidopsis thaliana (Mouse-ear cress).